Reading from the N-terminus, the 212-residue chain is Uridine kinase (212 aa).

13–20 contributes to the ATP binding site; it reads GGSGSGKT.

Belongs to the uridine kinase family.

Its subcellular location is the cytoplasm. It catalyses the reaction uridine + ATP = UMP + ADP + H(+). It carries out the reaction cytidine + ATP = CMP + ADP + H(+). Its pathway is pyrimidine metabolism; CTP biosynthesis via salvage pathway; CTP from cytidine: step 1/3. It functions in the pathway pyrimidine metabolism; UMP biosynthesis via salvage pathway; UMP from uridine: step 1/1. In Bacillus cereus (strain B4264), this protein is Uridine kinase.